The sequence spans 193 residues: MLLLASASPARLRLLELAQIPHRVRVSGVDESSIENHDPALLVQQLALAKATAVSDGIDADISSVLGCDSLLLFEGEVFGKPQDGEEAAARWRRMAGGSGELLTGHALLVRSGENRLACISTRVHFAAITEEEIQAYVTTGEPLHCAGGFALEGRGASLIAGLEGCYSNVIGLSLPWLRSVLRDSKMDQSASG.

Residue aspartate 69 is the Proton acceptor of the active site.

It belongs to the Maf family. A divalent metal cation serves as cofactor.

It localises to the cytoplasm. It catalyses the reaction a ribonucleoside 5'-triphosphate + H2O = a ribonucleoside 5'-phosphate + diphosphate + H(+). The catalysed reaction is a 2'-deoxyribonucleoside 5'-triphosphate + H2O = a 2'-deoxyribonucleoside 5'-phosphate + diphosphate + H(+). Its function is as follows. Nucleoside triphosphate pyrophosphatase. May have a dual role in cell division arrest and in preventing the incorporation of modified nucleotides into cellular nucleic acids. The protein is Nucleoside triphosphate pyrophosphatase of Parasynechococcus marenigrum (strain WH8102).